Reading from the N-terminus, the 263-residue chain is Protein PUN1 (263 aa).

Over 1 to 6 (MRNFFT) the chain is Cytoplasmic. Residues 7–27 (LFFAAIFSLGALILAIVACAG) traverse the membrane as a helical segment. Topologically, residues 28–143 (STKNYSPINK…MTYYNNLVKC (116 aa)) are extracellular. Residue Asn100 is glycosylated (N-linked (GlcNAc...) asparagine). The chain crosses the membrane as a helical span at residues 144-164 (MFITILIGIVLTFVNLVFNVL). At 165 to 172 (RWIIHIRP) the chain is on the cytoplasmic side. A helical membrane pass occupies residues 173-193 (LTWFGAFFSFFAFAALLVSIG). Residues 194-223 (SCLGTYSYIKYILKHNYSDYGISMSIGRNY) are Extracellular-facing. An N-linked (GlcNAc...) asparagine glycan is attached at Asn209. The helical transmembrane segment at 224–244 (QGLMWGAVVGALLNFILWCSV) threads the bilayer. At 245 to 263 (RSRPTVIYANAPIEEKPLI) the chain is on the cytoplasmic side. A Glycyl lysine isopeptide (Lys-Gly) (interchain with G-Cter in ubiquitin) cross-link involves residue Lys260.

Belongs to the SUR7 family. In terms of processing, N-glycosylated.

The protein localises to the cell membrane. In terms of biological role, contributes to the wild-type cellular response to nitrogen stress through signaling pathways that regulate the expression of genes involved in amino acid biosynthesis. Required for wild-type filamentous growth, cell growth, and cell-cell adhesion. This chain is Protein PUN1 (PUN1), found in Saccharomyces cerevisiae (strain ATCC 204508 / S288c) (Baker's yeast).